Here is a 139-residue protein sequence, read N- to C-terminus: Nucleoside diphosphate kinase (139 aa).

ATP contacts are provided by lysine 11, phenylalanine 59, arginine 87, threonine 93, arginine 104, and asparagine 114. The active-site Pros-phosphohistidine intermediate is histidine 117.

Belongs to the NDK family. As to quaternary structure, homotetramer. Requires Mg(2+) as cofactor.

It is found in the cytoplasm. It carries out the reaction a 2'-deoxyribonucleoside 5'-diphosphate + ATP = a 2'-deoxyribonucleoside 5'-triphosphate + ADP. The catalysed reaction is a ribonucleoside 5'-diphosphate + ATP = a ribonucleoside 5'-triphosphate + ADP. Major role in the synthesis of nucleoside triphosphates other than ATP. The ATP gamma phosphate is transferred to the NDP beta phosphate via a ping-pong mechanism, using a phosphorylated active-site intermediate. This Pasteurella multocida (strain Pm70) protein is Nucleoside diphosphate kinase.